A 176-amino-acid chain; its full sequence is Ribosome maturation factor RimM (176 aa).

The region spanning 94-176 (KDEFFYFEIL…RFGFEILQNS (83 aa)) is the PRC barrel domain.

It belongs to the RimM family. In terms of assembly, binds ribosomal protein uS19.

Its subcellular location is the cytoplasm. Its function is as follows. An accessory protein needed during the final step in the assembly of 30S ribosomal subunit, possibly for assembly of the head region. Essential for efficient processing of 16S rRNA. May be needed both before and after RbfA during the maturation of 16S rRNA. It has affinity for free ribosomal 30S subunits but not for 70S ribosomes. This Campylobacter hominis (strain ATCC BAA-381 / DSM 21671 / CCUG 45161 / LMG 19568 / NCTC 13146 / CH001A) protein is Ribosome maturation factor RimM.